The following is a 100-amino-acid chain: Large ribosomal subunit protein bL28 (100 aa).

Belongs to the bacterial ribosomal protein bL28 family.

The protein is Large ribosomal subunit protein bL28 of Gluconobacter oxydans (strain 621H) (Gluconobacter suboxydans).